We begin with the raw amino-acid sequence, 338 residues long: mRNA decay activator protein ZFP36L1 (338 aa).

Positions 1-111 (MTTTLVSATI…QKQPGGGQVN (111 aa)) are necessary and sufficient for the association with mRNA decay enzymes and mRNA decay activation. Ser-54 is modified (phosphoserine; by MAPKAPK2). The residue at position 90 (Ser-90) is a Phosphoserine; by PKB/AKT1. Ser-92 is modified (phosphoserine; by PKB/AKT1 and MAPKAPK2). Residues 93-113 (EGGERLLPTQKQPGGGQVNSS) are disordered. 2 consecutive C3H1-type zinc fingers follow at residues 114 to 142 (RYKT…HGIH) and 152 to 180 (KYKT…HNAE). The necessary for mRNA decay activation stretch occupies residues 185–338 (LAGARDLSAD…IFSRLSISDD (154 aa)). Ser-203 bears the Phosphoserine; by PKB/AKT1 and MAPKAPK2 mark. The segment at 273-338 (SPTTFLFRPM…IFSRLSISDD (66 aa)) is disordered. The segment covering 296–318 (QDSLSDQEGYLSSSSSSHSGSDS) has biased composition (low complexity). Ser-318 carries the post-translational modification Phosphoserine. Ser-334 bears the Phosphoserine; by RPS6KA1 mark.

Associates with the cytoplasmic CCR4-NOT deadenylase and RNA exosome complexes to trigger ARE-containing mRNA deadenylation and decay processes. Interacts with CNOT1. Interacts (via N-terminus) with CNOT6. Interacts with CNOT7; this interaction is inhibited in response to phorbol 12-myristate 13-acetate (PMA) treatment in a p38 MAPK-dependent manner. Interacts with DCP1A. Interacts (via N-terminus) with DCP2. Interacts (via N-terminus) with EXOSC2. Interacts with XRN1. Interacts (via phosphorylated form) with YWHAB; this interaction occurs in a protein kinase AKT1-dependent manner. Interacts (via phosphorylated form) with YWHAZ; this interaction occurs in a p38 MAPK- and AKT-signaling pathways. Post-translationally, phosphorylated. Phosphorylated by RPS6KA1 at Ser-334 upon phorbol 12-myristate 13-acetate (PMA) treatment; this phosphorylation results in dissociation of the CCR4-NOT deadenylase complex and induces p38 MAPK-mediated stabilization of the low-density lipoprotein receptor LDLR mRNA. Phosphorylated by protein kinase AKT1 at Ser-92 and Ser-203 in response to insulin; these phosphorylations stabilize ZFP36L1, increase the association with 14-3-3 proteins and mediate ARE-containing mRNA stabilization. AKT1-mediated phosphorylation at Ser-92 does not impair ARE-containing RNA-binding. Phosphorylated at Ser-54, Ser-92 and Ser-203 by MAPKAPK2; these phosphorylations increase the association with 14-3-3 proteins and mediate ARE-containing mRNA stabilization in a protein kinase AKT1-independent manner. MAPKAPK2-mediated phosphorylations at Ser-54, Ser-92 and Ser-203 do not impair ARE-containing RNA-binding. Phosphorylations increase the association with 14-3-3 proteins and mediate ARE-containing mRNA stabilization during early adipogenesis in a p38 MAPK- and AKT-dependent manner. Ubiquitinated. Ubiquitination leads to proteasomal degradation, a process inhibited by phosphorylations at Ser-90, Ser-92 and Ser-203. In terms of tissue distribution, expressed mainly in the basal epidermal layer, weakly in the suprabasal epidermal layers. Expressed in epidermal keratinocytes (at protein level). Expressed in osteoblasts.

The protein localises to the nucleus. It localises to the cytoplasm. The protein resides in the cytoplasmic granule. Its subcellular location is the P-body. Functionally, zinc-finger RNA-binding protein that destabilizes several cytoplasmic AU-rich element (ARE)-containing mRNA transcripts by promoting their poly(A) tail removal or deadenylation, and hence provide a mechanism for attenuating protein synthesis. Acts as a 3'-untranslated region (UTR) ARE mRNA-binding adapter protein to communicate signaling events to the mRNA decay machinery. Functions by recruiting the CCR4-NOT deadenylase complex and components of the cytoplasmic RNA decay machinery to the bound ARE-containing mRNAs, and hence promotes ARE-mediated mRNA deadenylation and decay processes. Also induces the degradation of ARE-containing mRNAs even in absence of poly(A) tail. Binds to 3'-UTR ARE of numerous mRNAs. Positively regulates early adipogenesis by promoting ARE-mediated mRNA decay of immediate early genes (IEGs). Promotes ARE-mediated mRNA decay of mineralocorticoid receptor NR3C2 mRNA in response to hypertonic stress. Negatively regulates hematopoietic/erythroid cell differentiation by promoting ARE-mediated mRNA decay of the transcription factor STAT5B mRNA. Positively regulates monocyte/macrophage cell differentiation by promoting ARE-mediated mRNA decay of the cyclin-dependent kinase CDK6 mRNA. Promotes degradation of ARE-containing pluripotency-associated mRNAs in embryonic stem cells (ESCs), such as NANOG, through a fibroblast growth factor (FGF)-induced MAPK-dependent signaling pathway, and hence attenuates ESC self-renewal and positively regulates mesendoderm differentiation. May play a role in mediating pro-apoptotic effects in malignant B-cells by promoting ARE-mediated mRNA decay of BCL2 mRNA. In association with ZFP36L2 maintains quiescence on developing B lymphocytes by promoting ARE-mediated decay of several mRNAs encoding cell cycle regulators that help B cells progress through the cell cycle, and hence ensuring accurate variable-diversity-joining (VDJ) recombination and functional immune cell formation. Together with ZFP36L2 is also necessary for thymocyte development and prevention of T-cell acute lymphoblastic leukemia (T-ALL) transformation by promoting ARE-mediated mRNA decay of the oncogenic transcription factor NOTCH1 mRNA. Participates in the delivery of target ARE-mRNAs to processing bodies (PBs). In addition to its cytosolic mRNA-decay function, plays a role in the regulation of nuclear mRNA 3'-end processing; modulates mRNA 3'-end maturation efficiency of the DLL4 mRNA through binding with an ARE embedded in a weak noncanonical polyadenylation (poly(A)) signal in endothelial cells. Also involved in the regulation of stress granule (SG) and P-body (PB) formation and fusion. Plays a role in vasculogenesis and endocardial development. Plays a role in the regulation of keratinocyte proliferation, differentiation and apoptosis. Plays a role in myoblast cell differentiation. The sequence is that of mRNA decay activator protein ZFP36L1 from Homo sapiens (Human).